We begin with the raw amino-acid sequence, 293 residues long: NAD kinase (293 aa).

Asp73 functions as the Proton acceptor in the catalytic mechanism. NAD(+)-binding positions include Asp73–Gly74, Asn147–Glu148, His158, Arg175, Asp177, Thr188–Ser193, and Gln248.

It belongs to the NAD kinase family. It depends on a divalent metal cation as a cofactor.

It is found in the cytoplasm. It catalyses the reaction NAD(+) + ATP = ADP + NADP(+) + H(+). In terms of biological role, involved in the regulation of the intracellular balance of NAD and NADP, and is a key enzyme in the biosynthesis of NADP. Catalyzes specifically the phosphorylation on 2'-hydroxyl of the adenosine moiety of NAD to yield NADP. The protein is NAD kinase of Photobacterium profundum (strain SS9).